The following is a 194-amino-acid chain: Thymidine kinase (194 aa).

ATP is bound by residues 15–22 (GCMFSGKT) and 88–91 (DELH). Residue Glu-89 is the Proton acceptor of the active site. Cys-148, Cys-151, Cys-186, and Cys-189 together coordinate Zn(2+).

The protein belongs to the thymidine kinase family. In terms of assembly, homotetramer.

It is found in the cytoplasm. The catalysed reaction is thymidine + ATP = dTMP + ADP + H(+). The polypeptide is Thymidine kinase (Roseiflexus castenholzii (strain DSM 13941 / HLO8)).